We begin with the raw amino-acid sequence, 599 residues long: Sulfite reductase [NADPH] flavoprotein alpha-component (599 aa).

Residues 64–202 (ITLISASQTG…VAAQWRARIV (139 aa)) form the Flavodoxin-like domain. FMN-binding positions include 70–75 (SQTGNA), 117–120 (STQG), and 153–162 (LGDTSYEFFC). Residues 234–448 (EAPLRASLSV…IEHNDNFRLP (215 aa)) form the FAD-binding FR-type domain. FAD is bound by residues Thr-322, Ala-356, 386 to 389 (RLYS), 404 to 406 (TVG), Tyr-410, and 419 to 422 (GGAS). NADP(+) contacts are provided by residues 519–520 (SR), 525–529 (KIYVQ), and Asp-561. Residue Tyr-599 participates in FAD binding.

The protein belongs to the NADPH-dependent sulphite reductase flavoprotein subunit CysJ family. In the N-terminal section; belongs to the flavodoxin family. This sequence in the C-terminal section; belongs to the flavoprotein pyridine nucleotide cytochrome reductase family. Alpha(8)-beta(8). The alpha component is a flavoprotein, the beta component is a hemoprotein. It depends on FAD as a cofactor. FMN is required as a cofactor.

It catalyses the reaction hydrogen sulfide + 3 NADP(+) + 3 H2O = sulfite + 3 NADPH + 4 H(+). It functions in the pathway sulfur metabolism; hydrogen sulfide biosynthesis; hydrogen sulfide from sulfite (NADPH route): step 1/1. Component of the sulfite reductase complex that catalyzes the 6-electron reduction of sulfite to sulfide. This is one of several activities required for the biosynthesis of L-cysteine from sulfate. The flavoprotein component catalyzes the electron flow from NADPH -&gt; FAD -&gt; FMN to the hemoprotein component. This is Sulfite reductase [NADPH] flavoprotein alpha-component from Salmonella arizonae (strain ATCC BAA-731 / CDC346-86 / RSK2980).